We begin with the raw amino-acid sequence, 379 residues long: Succinyl-diaminopimelate desuccinylase (379 aa).

H70 is a binding site for Zn(2+). D72 is a catalytic residue. D103 is a Zn(2+) binding site. Residue E137 is the Proton acceptor of the active site. Positions 138, 166, and 352 each coordinate Zn(2+).

The protein belongs to the peptidase M20A family. DapE subfamily. As to quaternary structure, homodimer. The cofactor is Zn(2+). Requires Co(2+) as cofactor.

It carries out the reaction N-succinyl-(2S,6S)-2,6-diaminopimelate + H2O = (2S,6S)-2,6-diaminopimelate + succinate. The protein operates within amino-acid biosynthesis; L-lysine biosynthesis via DAP pathway; LL-2,6-diaminopimelate from (S)-tetrahydrodipicolinate (succinylase route): step 3/3. Functionally, catalyzes the hydrolysis of N-succinyl-L,L-diaminopimelic acid (SDAP), forming succinate and LL-2,6-diaminopimelate (DAP), an intermediate involved in the bacterial biosynthesis of lysine and meso-diaminopimelic acid, an essential component of bacterial cell walls. The protein is Succinyl-diaminopimelate desuccinylase of Burkholderia pseudomallei (strain 1106a).